Reading from the N-terminus, the 348-residue chain is Phosphate acyltransferase (348 aa).

It belongs to the PlsX family. In terms of assembly, homodimer. Probably interacts with PlsY.

The protein resides in the cytoplasm. It carries out the reaction a fatty acyl-[ACP] + phosphate = an acyl phosphate + holo-[ACP]. It participates in lipid metabolism; phospholipid metabolism. In terms of biological role, catalyzes the reversible formation of acyl-phosphate (acyl-PO(4)) from acyl-[acyl-carrier-protein] (acyl-ACP). This enzyme utilizes acyl-ACP as fatty acyl donor, but not acyl-CoA. The polypeptide is Phosphate acyltransferase (Leuconostoc citreum (strain KM20)).